Consider the following 212-residue polypeptide: 2-phospho-L-lactate guanylyltransferase (212 aa).

This sequence belongs to the CofC family. In terms of assembly, homodimer.

The enzyme catalyses (2S)-2-phospholactate + GTP + H(+) = (2S)-lactyl-2-diphospho-5'-guanosine + diphosphate. It participates in cofactor biosynthesis; coenzyme F420 biosynthesis. Functionally, guanylyltransferase that catalyzes the activation of (2S)-2-phospholactate (2-PL) as (2S)-lactyl-2-diphospho-5'-guanosine, via the condensation of 2-PL with GTP. It is involved in the biosynthesis of coenzyme F420, a hydride carrier cofactor. This chain is 2-phospho-L-lactate guanylyltransferase, found in Methanocorpusculum labreanum (strain ATCC 43576 / DSM 4855 / Z).